Reading from the N-terminus, the 212-residue chain is Proteasome subunit beta (212 aa).

The propeptide at 1-11 (MSQEHQDVKTG) is removed in mature form; by autocatalysis. The active-site Nucleophile is the T12.

Belongs to the peptidase T1B family. In terms of assembly, the 20S proteasome core is composed of 14 alpha and 14 beta subunits that assemble into four stacked heptameric rings, resulting in a barrel-shaped structure. The two inner rings, each composed of seven catalytic beta subunits, are sandwiched by two outer rings, each composed of seven alpha subunits. The catalytic chamber with the active sites is on the inside of the barrel. Has a gated structure, the ends of the cylinder being occluded by the N-termini of the alpha-subunits. Is capped at one or both ends by the proteasome regulatory ATPase, PAN.

The protein localises to the cytoplasm. It catalyses the reaction Cleavage of peptide bonds with very broad specificity.. With respect to regulation, the formation of the proteasomal ATPase PAN-20S proteasome complex, via the docking of the C-termini of PAN into the intersubunit pockets in the alpha-rings, triggers opening of the gate for substrate entry. Interconversion between the open-gate and close-gate conformations leads to a dynamic regulation of the 20S proteasome proteolysis activity. Functionally, component of the proteasome core, a large protease complex with broad specificity involved in protein degradation. This Methanocorpusculum labreanum (strain ATCC 43576 / DSM 4855 / Z) protein is Proteasome subunit beta.